Here is a 285-residue protein sequence, read N- to C-terminus: Glutamate racemase (285 aa).

Substrate-binding positions include 30–31 and 62–63; these read DS and YG. Residue Cys-94 is the Proton donor/acceptor of the active site. 95 to 96 contacts substrate; that stretch reads NT. Residue Cys-206 is the Proton donor/acceptor of the active site. Substrate is bound at residue 207–208; that stretch reads TH.

The protein belongs to the aspartate/glutamate racemases family.

The catalysed reaction is L-glutamate = D-glutamate. The protein operates within cell wall biogenesis; peptidoglycan biosynthesis. In terms of biological role, provides the (R)-glutamate required for cell wall biosynthesis. This chain is Glutamate racemase, found in Pectobacterium carotovorum subsp. carotovorum (strain PC1).